The following is a 75-amino-acid chain: Small, acid-soluble spore protein Tlp (75 aa).

It belongs to the Tlp family.

It is found in the spore core. The sequence is that of Small, acid-soluble spore protein Tlp from Geobacillus thermodenitrificans (strain NG80-2).